The chain runs to 467 residues: Glutamyl-tRNA(Gln) amidotransferase subunit A (467 aa).

Residues Lys-57 and Ser-132 each act as charge relay system in the active site. Ser-156 functions as the Acyl-ester intermediate in the catalytic mechanism.

It belongs to the amidase family. GatA subfamily. As to quaternary structure, heterotrimer of A, B and C subunits.

The catalysed reaction is L-glutamyl-tRNA(Gln) + L-glutamine + ATP + H2O = L-glutaminyl-tRNA(Gln) + L-glutamate + ADP + phosphate + H(+). In terms of biological role, allows the formation of correctly charged Gln-tRNA(Gln) through the transamidation of misacylated Glu-tRNA(Gln) in organisms which lack glutaminyl-tRNA synthetase. The reaction takes place in the presence of glutamine and ATP through an activated gamma-phospho-Glu-tRNA(Gln). The sequence is that of Glutamyl-tRNA(Gln) amidotransferase subunit A from Pseudothermotoga lettingae (strain ATCC BAA-301 / DSM 14385 / NBRC 107922 / TMO) (Thermotoga lettingae).